A 304-amino-acid polypeptide reads, in one-letter code: Dermonecrotic toxin LiSicTox-betaIA1i (304 aa).

An N-terminal signal peptide occupies residues 1–21 (MLLPAVISFIVYAVFLQEANG). Residues 22 to 26 (HAAER) constitute a propeptide that is removed on maturation. Histidine 38 is an active-site residue. Glutamate 58 and aspartate 60 together coordinate Mg(2+). The active-site Nucleophile is the histidine 74. Cystine bridges form between cysteine 78–cysteine 84 and cysteine 80–cysteine 223. Aspartate 118 serves as a coordination point for Mg(2+).

Belongs to the arthropod phospholipase D family. Class II subfamily. Class IIb sub-subfamily. Mg(2+) serves as cofactor. As to expression, expressed by the venom gland.

It localises to the secreted. It carries out the reaction an N-(acyl)-sphingosylphosphocholine = an N-(acyl)-sphingosyl-1,3-cyclic phosphate + choline. It catalyses the reaction an N-(acyl)-sphingosylphosphoethanolamine = an N-(acyl)-sphingosyl-1,3-cyclic phosphate + ethanolamine. The enzyme catalyses a 1-acyl-sn-glycero-3-phosphocholine = a 1-acyl-sn-glycero-2,3-cyclic phosphate + choline. The catalysed reaction is a 1-acyl-sn-glycero-3-phosphoethanolamine = a 1-acyl-sn-glycero-2,3-cyclic phosphate + ethanolamine. Dermonecrotic toxins cleave the phosphodiester linkage between the phosphate and headgroup of certain phospholipids (sphingolipid and lysolipid substrates), forming an alcohol (often choline) and a cyclic phosphate. This toxin acts on sphingomyelin (SM) with low activity. It may also act on ceramide phosphoethanolamine (CPE), lysophosphatidylcholine (LPC) and lysophosphatidylethanolamine (LPE), but not on lysophosphatidylserine (LPS), and lysophosphatidylglycerol (LPG). It acts by transphosphatidylation, releasing exclusively cyclic phosphate products as second products. Induces inflammatory response but no or very weak hemolysis, dermonecrosis, vascular permeability, edema, and cytotoxicity against renal epithelial cells. Causes swelling and erythema. In vivo, is not lethal to mice when intraperitoneally injected. This chain is Dermonecrotic toxin LiSicTox-betaIA1i, found in Loxosceles intermedia (Brown spider).